A 396-amino-acid polypeptide reads, in one-letter code: 1-deoxy-D-xylulose 5-phosphate reductoisomerase (396 aa).

NADPH contacts are provided by threonine 10, glycine 11, serine 12, isoleucine 13, and asparagine 123. Position 124 (lysine 124) interacts with 1-deoxy-D-xylulose 5-phosphate. An NADPH-binding site is contributed by glutamate 125. Aspartate 149 contributes to the Mn(2+) binding site. The 1-deoxy-D-xylulose 5-phosphate site is built by serine 150, glutamate 151, serine 185, and histidine 208. Glutamate 151 serves as a coordination point for Mn(2+). Glycine 214 serves as a coordination point for NADPH. 1-deoxy-D-xylulose 5-phosphate is bound by residues serine 221, asparagine 226, lysine 227, and glutamate 230. Glutamate 230 is a binding site for Mn(2+).

It belongs to the DXR family. Mg(2+) serves as cofactor. It depends on Mn(2+) as a cofactor.

It catalyses the reaction 2-C-methyl-D-erythritol 4-phosphate + NADP(+) = 1-deoxy-D-xylulose 5-phosphate + NADPH + H(+). The protein operates within isoprenoid biosynthesis; isopentenyl diphosphate biosynthesis via DXP pathway; isopentenyl diphosphate from 1-deoxy-D-xylulose 5-phosphate: step 1/6. Functionally, catalyzes the NADPH-dependent rearrangement and reduction of 1-deoxy-D-xylulose-5-phosphate (DXP) to 2-C-methyl-D-erythritol 4-phosphate (MEP). The sequence is that of 1-deoxy-D-xylulose 5-phosphate reductoisomerase from Shewanella sp. (strain MR-4).